We begin with the raw amino-acid sequence, 372 residues long: Biotin synthase (372 aa).

The Radical SAM core domain maps to 73–308 (CCGNTVDLCS…QQIIRYAGGR (236 aa)). 3 residues coordinate [4Fe-4S] cluster: Cys91, Cys95, and Cys98. 4 residues coordinate [2Fe-2S] cluster: Cys136, Cys173, Cys233, and Arg303.

The protein belongs to the radical SAM superfamily. Biotin synthase family. Homodimer. It depends on [4Fe-4S] cluster as a cofactor. The cofactor is [2Fe-2S] cluster.

It catalyses the reaction (4R,5S)-dethiobiotin + (sulfur carrier)-SH + 2 reduced [2Fe-2S]-[ferredoxin] + 2 S-adenosyl-L-methionine = (sulfur carrier)-H + biotin + 2 5'-deoxyadenosine + 2 L-methionine + 2 oxidized [2Fe-2S]-[ferredoxin]. It participates in cofactor biosynthesis; biotin biosynthesis; biotin from 7,8-diaminononanoate: step 2/2. Catalyzes the conversion of dethiobiotin (DTB) to biotin by the insertion of a sulfur atom into dethiobiotin via a radical-based mechanism. This is Biotin synthase from Cyanothece sp. (strain PCC 7425 / ATCC 29141).